The following is a 367-amino-acid chain: Alginate lyase (367 aa).

An N-terminal signal peptide occupies residues 1–24 (MTIINRKTAPALLALALFGGAAQA). Substrate is bound by residues 63–64 (SK), 136–137 (HT), and Tyr-254.

Belongs to the polysaccharide lyase 5 family.

It localises to the periplasm. It carries out the reaction Eliminative cleavage of alginate to give oligosaccharides with 4-deoxy-alpha-L-erythro-hex-4-enuronosyl groups at their non-reducing ends and beta-D-mannuronate at their reducing end.. In terms of biological role, catalyzes the depolymerization of alginate by cleaving the beta-1,4 glycosidic bond between two adjacent sugar residues via a beta-elimination mechanism. May serve to degrade mislocalized alginate that is trapped in the periplasmic space. This is Alginate lyase from Pseudomonas entomophila (strain L48).